Reading from the N-terminus, the 142-residue chain is Hemoglobin subunit alpha (142 aa).

An N-acetylserine modification is found at S1. In terms of domain architecture, Globin spans 1 to 142; it reads SLSDKDKNTV…LALALSERYR (142 aa). Residue H59 coordinates O2. Heme b is bound at residue H88.

It belongs to the globin family. As to quaternary structure, heterotetramer of two alpha chains and two beta chains. Can form polymers. Red blood cells.

In terms of biological role, involved in oxygen transport from gills to the various peripheral tissues. In Chelidonichthys kumu (Bluefin gurnard), this protein is Hemoglobin subunit alpha (hba).